An 83-amino-acid chain; its full sequence is Kunitz-type serine protease inhibitor TCI (83 aa).

Residues 1 to 25 form the signal peptide; sequence MSSGRLLLLLGLLTLWAELTPVSGL. Positions 31 to 81 constitute a BPTI/Kunitz inhibitor domain; the sequence is CELPAVSGFCKAYIPSFYYNPDASACQKFIYGGCGGNANKFKTIEECHRTC. 3 disulfides stabilise this stretch: C31–C81, C40–C64, and C56–C77.

Expressed by the venom gland.

The protein localises to the secreted. Functionally, serine protease inhibitor that strongly inhibits chymotrypsin (Ki=84.6 nM) and trypsin (Ki=391 nM). This chain is Kunitz-type serine protease inhibitor TCI, found in Ophiophagus hannah (King cobra).